The sequence spans 1125 residues: tRNA (34-2'-O)-methyltransferase regulator WDR6 (1125 aa).

At methionine 1 the chain carries N-acetylmethionine. WD repeat units follow at residues 89–130 (SKGL…GNVA), 155–197 (TDRC…PDNK), 207–246 (GHVGVIFSMSYLESKGLLATASEDRSVRIWKVGDLRVPGG), 256–294 (GHSARVWQVKLLENYLISAGEDCVCLVWSHEGEILQAFR), 295–335 (GHQG…YPGL), 346–384 (SRPGALKAVTLAGSWRVLAVTDVGGLYLYDLEVKCWEQL), 433–475 (LFQG…TGKA), 489–528 (SKQRWHTCSAFLPPGDFLVCGDRRGSVLLFPARPCLFKKP), 567–605 (HGKQGVTSVTCHGGYVYSTGRDGSYYQLFVHGGRLQPVL), 611–650 (RGMNWIAGLRMAPDGSMVVLGFHANEFVVWSPRSHEKLHI), 652–692 (NCGG…IRPN), 725–765 (EHPD…GAAH), 767–798 (LTAVCNHISSVRALAVWGVGTPGGPQDSHPGL), 860–905 (TRYM…RILH), 912–958 (HHKR…DRGS), 982–1024 (AHSC…PELE), and 1047–1085 (AHAAHVTGIKILSPKLMVSASIDQRLTFWRLGNGEPTFM).

Belongs to the WD repeat WDR6 family. Interacts with FTSJ1; the interaction is direct, and required for 2'-O-methylation of position 34 in substrate tRNAs. Interacts with IRS4. Interacts with STK11/LKB1. As to expression, expressed in hypothalamus, hippocampus, cerebrum cortex and cerebellum.

It is found in the cytoplasm. In terms of biological role, together with methyltransferase FTSJ1, methylates the 2'-O-ribose of nucleotides at position 34 of the tRNA anticodon loop of substrate tRNAs. Required for the correct positioning of the substrate tRNA for methylation. Required to suppress amino acid starvation-induced autophagy. Enhances the STK11/LKB1-induced cell growth suppression activity. In Rattus norvegicus (Rat), this protein is tRNA (34-2'-O)-methyltransferase regulator WDR6 (Wdr6).